A 117-amino-acid chain; its full sequence is Holo-[acyl-carrier-protein] synthase (117 aa).

Mg(2+)-binding residues include Asp8 and Glu55.

This sequence belongs to the P-Pant transferase superfamily. AcpS family. The cofactor is Mg(2+).

Its subcellular location is the cytoplasm. It catalyses the reaction apo-[ACP] + CoA = holo-[ACP] + adenosine 3',5'-bisphosphate + H(+). Functionally, transfers the 4'-phosphopantetheine moiety from coenzyme A to a Ser of acyl-carrier-protein. The sequence is that of Holo-[acyl-carrier-protein] synthase from Finegoldia magna (strain ATCC 29328 / DSM 20472 / WAL 2508) (Peptostreptococcus magnus).